A 276-amino-acid polypeptide reads, in one-letter code: Dermonecrotic toxin LsaSicTox-alphaIB2i (276 aa).

The active site involves His-5. 2 residues coordinate Mg(2+): Glu-25 and Asp-27. His-41 acts as the Nucleophile in catalysis. 2 disulfides stabilise this stretch: Cys-45/Cys-51 and Cys-47/Cys-190. Asp-85 serves as a coordination point for Mg(2+). Asn-129 and Asn-253 each carry an N-linked (GlcNAc...) asparagine glycan.

Belongs to the arthropod phospholipase D family. Class II subfamily. The cofactor is Mg(2+). Expressed by the venom gland.

The protein resides in the secreted. It carries out the reaction an N-(acyl)-sphingosylphosphocholine = an N-(acyl)-sphingosyl-1,3-cyclic phosphate + choline. The enzyme catalyses an N-(acyl)-sphingosylphosphoethanolamine = an N-(acyl)-sphingosyl-1,3-cyclic phosphate + ethanolamine. The catalysed reaction is a 1-acyl-sn-glycero-3-phosphocholine = a 1-acyl-sn-glycero-2,3-cyclic phosphate + choline. It catalyses the reaction a 1-acyl-sn-glycero-3-phosphoethanolamine = a 1-acyl-sn-glycero-2,3-cyclic phosphate + ethanolamine. In terms of biological role, dermonecrotic toxins cleave the phosphodiester linkage between the phosphate and headgroup of certain phospholipids (sphingolipid and lysolipid substrates), forming an alcohol (often choline) and a cyclic phosphate. This toxin acts on sphingomyelin (SM). It may also act on ceramide phosphoethanolamine (CPE), lysophosphatidylcholine (LPC) and lysophosphatidylethanolamine (LPE), but not on lysophosphatidylserine (LPS), and lysophosphatidylglycerol (LPG). It acts by transphosphatidylation, releasing exclusively cyclic phosphate products as second products. Induces dermonecrosis, hemolysis, increased vascular permeability, edema, inflammatory response, and platelet aggregation. This Loxosceles sabina (Tucson recluse spider) protein is Dermonecrotic toxin LsaSicTox-alphaIB2i.